The primary structure comprises 217 residues: IMPACT family member YvyE (217 aa).

Belongs to the IMPACT family.

The sequence is that of IMPACT family member YvyE (yvyE) from Bacillus subtilis (strain 168).